The sequence spans 247 residues: 3-deoxy-manno-octulosonate cytidylyltransferase (247 aa).

This sequence belongs to the KdsB family.

The protein resides in the cytoplasm. It carries out the reaction 3-deoxy-alpha-D-manno-oct-2-ulosonate + CTP = CMP-3-deoxy-beta-D-manno-octulosonate + diphosphate. The protein operates within nucleotide-sugar biosynthesis; CMP-3-deoxy-D-manno-octulosonate biosynthesis; CMP-3-deoxy-D-manno-octulosonate from 3-deoxy-D-manno-octulosonate and CTP: step 1/1. It participates in bacterial outer membrane biogenesis; lipopolysaccharide biosynthesis. In terms of biological role, activates KDO (a required 8-carbon sugar) for incorporation into bacterial lipopolysaccharide in Gram-negative bacteria. This Methylobacterium sp. (strain 4-46) protein is 3-deoxy-manno-octulosonate cytidylyltransferase.